The primary structure comprises 1052 residues: Mitotic checkpoint serine/threonine-protein kinase BUB1 beta (1052 aa).

Residues 56 to 219 enclose the BUB1 N-terminal domain; sequence FESEIRFYSG…LEPSEPQRSS (164 aa). The Nuclear localization signal signature appears at 105–112; the sequence is GETRYYND. The necessary for interaction with KNL1 stretch occupies residues 146–179; it reads AQFYISWAEEYEARENFKKADIIFQEGIERKAEP. 2 disordered regions span residues 206 to 256 and 272 to 327; these read EEEA…NAVP and ADTA…TSIP. The D-box signature appears at 217 to 225; that stretch reads RSSLAELKS. Lysine 243 is subject to N6-acetyllysine; by PCAF. Position 360 is a phosphoserine (serine 360). The segment at 361–381 is disordered; sequence TRKPGREEGDPLQRVQSHQQG. Serine 428 carries the post-translational modification Phosphoserine. The tract at residues 496-552 is disordered; sequence SNPREISPAENILQEQPDSKGSSMPFSIFDESLSDKKDKSPATGGPQVLNAQRRPLS. Over residues 508-520 the composition is skewed to polar residues; that stretch reads LQEQPDSKGSSMP. Residues serine 535 and serine 659 each carry the phosphoserine modification. Serine 665 bears the Phosphoserine; by PLK1 mark. Serine 686 is subject to Phosphoserine. The 285-residue stretch at 756 to 1040 folds into the Protein kinase domain; it reads VIKQEHLTCD…TISPEALLTQ (285 aa). 762–770 provides a ligand contact to ATP; it reads LTCDDYRLF. Threonine 781 carries the phosphothreonine; by PLK1 modification. ATP is bound at residue lysine 784. The active-site Proton acceptor is aspartate 871. A Phosphothreonine; by PLK1 modification is found at threonine 998. Serine 1033 and serine 1050 each carry phosphoserine.

This sequence belongs to the protein kinase superfamily. Ser/Thr protein kinase family. BUB1 subfamily. As to quaternary structure, interacts with CENPE. Interacts with PLK1. Part of a complex containing BUB3, CDC20 and BUB1B. Interacts with anaphase-promoting complex/cyclosome (APC/C). Interacts with KNL1. Interacts with KAT2B. Interacts with RIPK3. Interacts with the closed conformation form of MAD2L1. Interacts with CDC20. Post-translationally, proteolytically cleaved by caspase-3 in a cell cycle specific manner. The cleavage might be involved in the durability of the cell cycle delay. In terms of processing, acetylation at Lys-243 regulates its degradation and timing in anaphase entry. Ubiquitinated. Degraded by the proteasome. Ubiquitinated by UBR5, promoting disassembly of the mitotic checkpoint complex from the APC/C complex. Post-translationally, sumoylated with SUMO2 and SUMO3. The sumoylation mediates the association with CENPE at the kinetochore. In terms of processing, autophosphorylated in vitro. Intramolecular autophosphorylation stimulated by CENPE. Phosphorylated during mitosis and hyperphosphorylated in mitotically arrested cells. Phosphorylation at Ser-659 and Ser-1033 occurs at kinetochores upon mitotic entry with dephosphorylation at the onset of anaphase. Proteolytically cleaved by caspase-3 in a cell cycle specific manner. The cleavage might be involved in the durability of the cell cycle delay. Caspase-3 cleavage is associated with abrogation of the mitotic checkpoint. The major site of cleavage is at Asp-603. In terms of tissue distribution, highly expressed in thymus followed by spleen.

The protein resides in the cytoplasm. The protein localises to the nucleus. It is found in the chromosome. Its subcellular location is the centromere. It localises to the kinetochore. It catalyses the reaction L-seryl-[protein] + ATP = O-phospho-L-seryl-[protein] + ADP + H(+). The enzyme catalyses L-threonyl-[protein] + ATP = O-phospho-L-threonyl-[protein] + ADP + H(+). With respect to regulation, kinase activity stimulated by CENPE. Its function is as follows. Essential component of the mitotic checkpoint. Required for normal mitosis progression and tumor suppression. The mitotic checkpoint delays anaphase until all chromosomes are properly attached to the mitotic spindle. One of its checkpoint functions is to inhibit the activity of the anaphase-promoting complex/cyclosome (APC/C) by blocking the binding of CDC20 to APC/C, independently of its kinase activity. The other is to monitor kinetochore activities that depend on the kinetochore motor CENPE. Required for kinetochore localization of CENPE. Negatively regulates PLK1 activity in interphase cells and suppresses centrosome amplification. Also implicated in triggering apoptosis in polyploid cells that exit aberrantly from mitotic arrest. Essential for tumor suppression. May play a role in regulating aging and fertility. This Mus musculus (Mouse) protein is Mitotic checkpoint serine/threonine-protein kinase BUB1 beta (Bub1b).